The primary structure comprises 160 residues: SsrA-binding protein (160 aa).

It belongs to the SmpB family.

Its subcellular location is the cytoplasm. Its function is as follows. Required for rescue of stalled ribosomes mediated by trans-translation. Binds to transfer-messenger RNA (tmRNA), required for stable association of tmRNA with ribosomes. tmRNA and SmpB together mimic tRNA shape, replacing the anticodon stem-loop with SmpB. tmRNA is encoded by the ssrA gene; the 2 termini fold to resemble tRNA(Ala) and it encodes a 'tag peptide', a short internal open reading frame. During trans-translation Ala-aminoacylated tmRNA acts like a tRNA, entering the A-site of stalled ribosomes, displacing the stalled mRNA. The ribosome then switches to translate the ORF on the tmRNA; the nascent peptide is terminated with the 'tag peptide' encoded by the tmRNA and targeted for degradation. The ribosome is freed to recommence translation, which seems to be the essential function of trans-translation. The polypeptide is SsrA-binding protein (Chloroflexus aurantiacus (strain ATCC 29364 / DSM 637 / Y-400-fl)).